A 362-amino-acid chain; its full sequence is MAGNTFGQLFRVTTFGESHGLALGAIVDGCPPGMELTEADLQGDLDRRKPGTSRFTTQRREDDEVKILSGVFEGKTTGTSIGLLIENTDQRSKDYSDIKDLFRPGHADYTYHQKYGIRDYRGGGRSSARETAMRVAAGAIAKKYLKEHCGIEIFGYLEQLGPIKAERFDKSIIENNPFFFADPDKLDELDAYMRDLKKQGDSIGAKLKVIATGVPVGLGEPVFDRLDAEIAHAMMGINAVKGVEVGDGFAVVEQHGSEHRDPMRPDGFLSNHAGGILGGISSGQEIVVGLALKPTSSIMVPGETIDKQGNPAEMVTRGRHDPCVGIRAVPIAEAMLALVLMDHLLRHRAQNFDVVTETPKLK.

NADP(+) contacts are provided by Arg-48 and Arg-54. FMN is bound by residues 125 to 127, 238 to 239, Gly-278, 293 to 297, and Arg-319; these read RSS, NA, and KPTSS.

It belongs to the chorismate synthase family. As to quaternary structure, homotetramer. FMNH2 serves as cofactor.

It carries out the reaction 5-O-(1-carboxyvinyl)-3-phosphoshikimate = chorismate + phosphate. It functions in the pathway metabolic intermediate biosynthesis; chorismate biosynthesis; chorismate from D-erythrose 4-phosphate and phosphoenolpyruvate: step 7/7. Catalyzes the anti-1,4-elimination of the C-3 phosphate and the C-6 proR hydrogen from 5-enolpyruvylshikimate-3-phosphate (EPSP) to yield chorismate, which is the branch point compound that serves as the starting substrate for the three terminal pathways of aromatic amino acid biosynthesis. This reaction introduces a second double bond into the aromatic ring system. In Tolumonas auensis (strain DSM 9187 / NBRC 110442 / TA 4), this protein is Chorismate synthase.